The sequence spans 94 residues: Co-chaperonin GroES (94 aa).

It belongs to the GroES chaperonin family. In terms of assembly, heptamer of 7 subunits arranged in a ring. Interacts with the chaperonin GroEL.

It localises to the cytoplasm. Functionally, together with the chaperonin GroEL, plays an essential role in assisting protein folding. The GroEL-GroES system forms a nano-cage that allows encapsulation of the non-native substrate proteins and provides a physical environment optimized to promote and accelerate protein folding. GroES binds to the apical surface of the GroEL ring, thereby capping the opening of the GroEL channel. The chain is Co-chaperonin GroES from Bacillus cytotoxicus (strain DSM 22905 / CIP 110041 / 391-98 / NVH 391-98).